A 1343-amino-acid polypeptide reads, in one-letter code: MVYSYSEKKRIRKDFGKRPKVLDIPYLLSIQLDSFKKFTDHDPTGERGLEAAFRSVFPIKSFSGYSELQYVSYKLGEPVFDVKECQIRGVTYSAPLRVKLRMVLFDREAAAGTVKDIKEQEVYMGDIPMMTNNGTFVINGTERVIVSQLHRSPGVFFDHDRGKTHSSGKVLYNARIIPYRGSWLDFEFDPKDALFVRIDRRRKLPATIILRALEYSTQDILDLFFERIEFKIKKDSLVMALVPDRLRGETAGYDIKDAEGALLVEAGRRITARHIKQLEKTNTTELEVPVDYIVGKYAAQDYIDEDTGEVLVTANSEITLEDLAKLSLAGIKNIDTLFINDLDHGAYIADTLRIDSTTNRLEALVEIYRMMRPGEPPTKDAAEGLFQNLFFSEERYDLSKVGRMKFNRRLEIAEDEGNGVLSKEDIVSVMKKIIEIRNGYDEVDDIDHLGNRRIRSVGEMAENQFRVGLVRVERAVRERLSLGDLNELMPQDLINAKPISAAVKEFFGSSQLSQFMDQNNPLSEVTHKRRISALGPGGLTRERAGFEVRDVHPTHYGRLCPIETPEGPNIGLINSLASFARTNSYGFLETPYRKVVDGVITDDVEYLSAIEEGRYVIAQANIEVDADGRMAEEQIACRHKGESTFMRAADVQYMDVSPQQIISVAASLIPFLEHDDANRALMGANMQRQAVPTLRADKPLVGTGIERTLAVDSGVVVAAKRGGVVDYVDASRIVVKVNEDELHAGEAGIDIYNLTKYTRSNQNTCINQRPCCSVGEPVVRGDVLADGPSTDLGDLALGQNMRIAFMPWNGYNFEDSILISERVAQEDRFTTIHIQELSCIARDTKLGSEEITADIPNVGESALSKLDESGIVYIGAEVKGGDILVGKVTPKGETQLTPEEKLLRAIFGEKASDVKDSSLRVPNSVKGTIIDVQVFTRDGVEKDKRALEIEDMHVRQARKDLGEEFKILEEGVLGRARNLLLSVGYSEAKLAEIPRKDVLIQVIDDETKQTELEQLAEQHEELKADFDKTFEIKRRKITQGDDLAPGVLKIVKVYLAVKRTIQPGDKMAGRHGNKGVISKICPVEDMPYDEEGNPVDIVLNPLGVPSRMNIGQVLEVHMGAAAKGIGNKITAMLEEQREIAELRGYIKQVYELGDDVLQRVDIDSFTDDEVVRLATNLKGGIPIATPAFDGAKEKEIKQMLALAGLPESGQLTLCDGRTGNEFERKVTVGYMYMLKLNHLVDDKMHARSTGSYSLVTQQPLGGKAQFGGQRFGEMEVWALEAYGAAYTLQEMLTVKSDDVNGRTQMYKNIVDGNHQMQPGMPESFNVLLKEIRSLGINIELDQE.

This sequence belongs to the RNA polymerase beta chain family. As to quaternary structure, the RNAP catalytic core consists of 2 alpha, 1 beta, 1 beta' and 1 omega subunit. When a sigma factor is associated with the core the holoenzyme is formed, which can initiate transcription.

It catalyses the reaction RNA(n) + a ribonucleoside 5'-triphosphate = RNA(n+1) + diphosphate. Its function is as follows. DNA-dependent RNA polymerase catalyzes the transcription of DNA into RNA using the four ribonucleoside triphosphates as substrates. This chain is DNA-directed RNA polymerase subunit beta, found in Shewanella frigidimarina (strain NCIMB 400).